The following is a 185-amino-acid chain: Ribosome-recycling factor (185 aa).

It belongs to the RRF family.

Its subcellular location is the cytoplasm. Functionally, responsible for the release of ribosomes from messenger RNA at the termination of protein biosynthesis. May increase the efficiency of translation by recycling ribosomes from one round of translation to another. The chain is Ribosome-recycling factor from Streptococcus pneumoniae serotype 19F (strain G54).